The sequence spans 391 residues: ATP-sensitive inward rectifier potassium channel 1 (391 aa).

Topologically, residues 1–77 are cytoplasmic; sequence MGASERSVFR…IWTTVLDLKW (77 aa). Ser44 bears the Phosphoserine; by SGK1 mark. A helical membrane pass occupies residues 78 to 102; that stretch reads RYKMTVFITAFLGSWFLFGLLWYVV. The Extracellular segment spans residues 103-127; sequence AYVHKDLPEFYPPDNRTPCVENING. Asn117 carries N-linked (GlcNAc...) asparagine glycosylation. An intramembrane region (helical; Pore-forming) is located at residues 128-139; the sequence is MTSAFLFSLETQ. The pore-forming intramembrane region spans 140-146; the sequence is VTIGYGF. Positions 141–146 match the Selectivity filter motif; the sequence is TIGYGF. Topologically, residues 147–155 are extracellular; that stretch reads RFVTEQCAT. A helical membrane pass occupies residues 156-177; it reads AIFLLIFQSILGVIINSFMCGA. At 178–391 the chain is on the cytoplasmic side; that stretch reads ILAKISRPKK…EVDETDDTQM (214 aa). The interval 180-207 is polyphosphoinositide (PIP2)-binding; sequence AKISRPKKRAKTITFSKNAVISKRGGKL. 223–230 is an ATP binding site; sequence GSHIYGKL.

It belongs to the inward rectifier-type potassium channel (TC 1.A.2.1) family. KCNJ1 subfamily. As to quaternary structure, interacts with SGK1 and SLC9A3R2/NHERF2. Post-translationally, phosphorylation at Ser-44 by SGK1 is necessary for its expression at the cell membrane. As to expression, mainly in kidney (renal cortex, medulla and papilla). In terms of tissue distribution, kidney.

It is found in the cell membrane. The enzyme catalyses K(+)(in) = K(+)(out). Its activity is regulated as follows. Inhibited by WNK3. Activated by phosphatidylinositol 4,5 biphosphate (PtdIns(4,5)P2). Its function is as follows. Inward rectifier potassium channels are characterized by a greater tendency to allow potassium to flow into the cell rather than out of it. Their voltage dependence is regulated by the concentration of extracellular potassium; as external potassium is raised, the voltage range of the channel opening shifts to more positive voltages. The inward rectification is mainly due to the blockage of outward current by internal magnesium. This channel is activated by internal ATP and can be blocked by external barium. In the kidney, probably plays a major role in potassium homeostasis. Inward rectifier potassium channels are characterized by a greater tendency to allow potassium to flow into the cell rather than out of it. Their voltage dependence is regulated by the concentration of extracellular potassium; as external potassium is raised, the voltage range of the channel opening shifts to more positive voltages. The polypeptide is ATP-sensitive inward rectifier potassium channel 1 (Kcnj1) (Rattus norvegicus (Rat)).